The chain runs to 351 residues: NADP-dependent isopropanol dehydrogenase (351 aa).

Zn(2+) contacts are provided by Cys37, His59, Glu60, and Asp150. Residues 175-178 (IGAV), 198-200 (GSR), Tyr218, 265-267 (INY), and Lys340 each bind NADP(+).

This sequence belongs to the zinc-containing alcohol dehydrogenase family. Homotetramer. Zn(2+) serves as cofactor.

It catalyses the reaction propan-2-ol + NADP(+) = acetone + NADPH + H(+). Its function is as follows. Alcohol dehydrogenase with a preference for medium chain secondary alcohols, such as 2-butanol and isopropanol. Has very low activity with primary alcohols, such as ethanol. Under physiological conditions, the enzyme reduces aldehydes and 2-ketones to produce secondary alcohols. Is active with acetaldehyde and propionaldehyde. This chain is NADP-dependent isopropanol dehydrogenase (adh), found in Clostridium beijerinckii (Clostridium MP).